The primary structure comprises 225 residues: Fibronectin type III domain-containing protein (225 aa).

The N-terminal stretch at Met1–Ala17 is a signal peptide. The Fibronectin type-III domain maps to Pro106–Ile206.

As to expression, component of the organic matrix of calcified shell layers like nacre and prisms.

It is found in the secreted. This chain is Fibronectin type III domain-containing protein, found in Mytilus californianus (California mussel).